A 116-amino-acid chain; its full sequence is Putative antiporter subunit mnhC2 (116 aa).

The next 3 membrane-spanning stretches (helical) occupy residues 3 to 23, 28 to 48, and 72 to 92; these read LILL…ILSV, IVIG…SMGN, and AIVL…LVLV.

Belongs to the CPA3 antiporters (TC 2.A.63) subunit C family. May form a heterooligomeric complex that consists of seven subunits: mnhA2, mnhB2, mnhC2, mnhD2, mnhE2, mnhF2 and mnhG2.

It is found in the cell membrane. The protein is Putative antiporter subunit mnhC2 (mnhC2) of Staphylococcus saprophyticus subsp. saprophyticus (strain ATCC 15305 / DSM 20229 / NCIMB 8711 / NCTC 7292 / S-41).